We begin with the raw amino-acid sequence, 300 residues long: Acetaldehyde dehydrogenase 1 (300 aa).

Position 11 to 14 (11 to 14 (SGNI)) interacts with NAD(+). Cysteine 126 acts as the Acyl-thioester intermediate in catalysis. NAD(+)-binding positions include 157 to 165 (SAGPGTRAN) and asparagine 276.

It belongs to the acetaldehyde dehydrogenase family.

The catalysed reaction is acetaldehyde + NAD(+) + CoA = acetyl-CoA + NADH + H(+). The protein is Acetaldehyde dehydrogenase 1 of Rhodococcus erythropolis (strain PR4 / NBRC 100887).